The following is a 959-amino-acid chain: Glycine dehydrogenase (decarboxylating) (959 aa).

K707 is subject to N6-(pyridoxal phosphate)lysine.

The protein belongs to the GcvP family. The glycine cleavage system is composed of four proteins: P, T, L and H. Pyridoxal 5'-phosphate serves as cofactor.

The enzyme catalyses N(6)-[(R)-lipoyl]-L-lysyl-[glycine-cleavage complex H protein] + glycine + H(+) = N(6)-[(R)-S(8)-aminomethyldihydrolipoyl]-L-lysyl-[glycine-cleavage complex H protein] + CO2. The glycine cleavage system catalyzes the degradation of glycine. The P protein binds the alpha-amino group of glycine through its pyridoxal phosphate cofactor; CO(2) is released and the remaining methylamine moiety is then transferred to the lipoamide cofactor of the H protein. The protein is Glycine dehydrogenase (decarboxylating) of Photobacterium profundum (strain SS9).